Consider the following 963-residue polypeptide: Translation initiation factor IF-2 (963 aa).

Basic and acidic residues predominate over residues 53 to 77 (SHGQADDSARKKITLTKRETSEIRQ). Residues 53 to 377 (SHGQADDSAR…RSNFQAPTEP (325 aa)) are disordered. Positions 78–87 (SDATGKTRTV) are enriched in polar residues. 4 stretches are compositionally biased toward basic and acidic residues: residues 98-110 (IKRD…HQAD), 123-183 (EEAR…KAEE), 197-250 (DTSR…EAEA), and 267-278 (PSERKAEEKKAE). The segment covering 343–356 (SSGGVGGWRGGPRG) has biased composition (gly residues). The tr-type G domain occupies 463–632 (PRPPVVTVMG…SLQAEVLELK (170 aa)). The tract at residues 472-479 (GHVDHGKT) is G1. 472-479 (GHVDHGKT) contacts GTP. A G2 region spans residues 497 to 501 (GITQH). Residues 518 to 521 (DTPG) form a G3 region. Residues 518-522 (DTPGH) and 572-575 (NKVD) contribute to the GTP site. The segment at 572-575 (NKVD) is G4. The interval 608–610 (SAK) is G5.

Belongs to the TRAFAC class translation factor GTPase superfamily. Classic translation factor GTPase family. IF-2 subfamily.

It is found in the cytoplasm. In terms of biological role, one of the essential components for the initiation of protein synthesis. Protects formylmethionyl-tRNA from spontaneous hydrolysis and promotes its binding to the 30S ribosomal subunits. Also involved in the hydrolysis of GTP during the formation of the 70S ribosomal complex. The chain is Translation initiation factor IF-2 from Cupriavidus taiwanensis (strain DSM 17343 / BCRC 17206 / CCUG 44338 / CIP 107171 / LMG 19424 / R1) (Ralstonia taiwanensis (strain LMG 19424)).